A 242-amino-acid chain; its full sequence is Glucosamine-6-phosphate deaminase (242 aa).

The active-site Proton acceptor; for enolization step is the D67. N136 acts as the For ring-opening step in catalysis. H138 functions as the Proton acceptor; for ring-opening step in the catalytic mechanism. E143 (for ring-opening step) is an active-site residue.

The protein belongs to the glucosamine/galactosamine-6-phosphate isomerase family. NagB subfamily.

The enzyme catalyses alpha-D-glucosamine 6-phosphate + H2O = beta-D-fructose 6-phosphate + NH4(+). It participates in amino-sugar metabolism; N-acetylneuraminate degradation; D-fructose 6-phosphate from N-acetylneuraminate: step 5/5. In terms of biological role, catalyzes the reversible isomerization-deamination of glucosamine 6-phosphate (GlcN6P) to form fructose 6-phosphate (Fru6P) and ammonium ion. In Clostridium beijerinckii (strain ATCC 51743 / NCIMB 8052) (Clostridium acetobutylicum), this protein is Glucosamine-6-phosphate deaminase.